The following is a 547-amino-acid chain: Cilia- and flagella- associated protein 210 (547 aa).

3 coiled-coil regions span residues 50-131, 183-251, and 342-405; these read ERIR…RKKA, VKLN…MKKN, and IARD…KADK. The disordered stretch occupies residues 214–237; sequence KQIEEHKEEEEARKKSEEKDAEEM.

As to quaternary structure, microtubule inner protein component of sperm flagellar doublet microtubules.

Its subcellular location is the cytoplasm. It localises to the cytoskeleton. The protein localises to the cilium axoneme. It is found in the flagellum axoneme. Its function is as follows. Microtubule inner protein (MIP) part of the dynein-decorated doublet microtubules (DMTs) in cilia axoneme, which is required for motile cilia beating. The polypeptide is Cilia- and flagella- associated protein 210 (Cfap210) (Mus musculus (Mouse)).